Reading from the N-terminus, the 461-residue chain is V-type ATP synthase beta chain (461 aa).

Belongs to the ATPase alpha/beta chains family.

Functionally, produces ATP from ADP in the presence of a proton gradient across the membrane. The V-type beta chain is a regulatory subunit. In Clostridium botulinum (strain Langeland / NCTC 10281 / Type F), this protein is V-type ATP synthase beta chain.